A 699-amino-acid chain; its full sequence is Long-chain-fatty-acid--CoA ligase 1 (699 aa).

An N-acetylmethionine modification is found at methionine 1. Tyrosine 9 is subject to 3'-nitrotyrosine. Residues leucine 25 to alanine 45 form a helical; Signal-anchor for type III membrane protein membrane-spanning segment. Residues threonine 46–isoleucine 699 are Cytoplasmic-facing. Phosphotyrosine is present on tyrosine 85. A 3'-nitrotyrosine modification is found at tyrosine 86. O-linked (GlcNAc) serine glycosylation is present at serine 136. N6-acetyllysine is present on residues lysine 208, lysine 357, and lysine 387. Serine 621 carries the post-translational modification Phosphoserine. N6-acetyllysine is present on lysine 633.

This sequence belongs to the ATP-dependent AMP-binding enzyme family. It depends on Mg(2+) as a cofactor.

It localises to the mitochondrion outer membrane. The protein localises to the peroxisome membrane. The protein resides in the microsome membrane. Its subcellular location is the endoplasmic reticulum membrane. It carries out the reaction a long-chain fatty acid + ATP + CoA = a long-chain fatty acyl-CoA + AMP + diphosphate. The enzyme catalyses (5Z,8Z,11Z,14Z)-eicosatetraenoate + ATP + CoA = (5Z,8Z,11Z,14Z)-eicosatetraenoyl-CoA + AMP + diphosphate. The catalysed reaction is 3,7,11,15-tetramethylhexadecanoate + ATP + CoA = phytanoyl-CoA + AMP + diphosphate. It catalyses the reaction hexadecanoate + ATP + CoA = hexadecanoyl-CoA + AMP + diphosphate. It carries out the reaction (E)-hexadec-2-enoate + ATP + CoA = (2E)-hexadecenoyl-CoA + AMP + diphosphate. The enzyme catalyses 2,6,10,14-tetramethylpentadecanoate + ATP + CoA = pristanoyl-CoA + AMP + diphosphate. The catalysed reaction is 14,15-epoxy-(5Z,8Z,11Z)-eicosatrienoate + ATP + CoA = 14,15-epoxy-(5Z,8Z,11Z)-eicosatrienoyl-CoA + AMP + diphosphate. It catalyses the reaction 5-hydroxy-(6E,8Z,11Z,14Z)-eicosatetraenoate + ATP + CoA = 5-hydroxy-(6E,8Z,11Z,14Z)-eicosatetraenoyl-CoA + AMP + diphosphate. It carries out the reaction 12-hydroxy-(5Z,8Z,10E,14Z)-eicosatetraenoate + ATP + CoA = 12-hydroxy-(5Z,8Z,10E,14Z)-eicosatetraenoyl-CoA + AMP + diphosphate. The enzyme catalyses 15-hydroxy-(5Z,8Z,11Z,13E)-eicosatetraenoate + ATP + CoA = 15-hydroxy-(5Z,8Z,11Z,13E)-eicosatetraenoyl-CoA + AMP + diphosphate. The catalysed reaction is (9Z)-octadecenoate + ATP + CoA = (9Z)-octadecenoyl-CoA + AMP + diphosphate. With respect to regulation, inhibited at high temperature and by arachidonate. Its function is as follows. Catalyzes the conversion of long-chain fatty acids to their active form acyl-CoAs for both synthesis of cellular lipids, and degradation via beta-oxidation. Preferentially uses palmitoleate, oleate and linoleate. Preferentially activates arachidonate than epoxyeicosatrienoic acids (EETs) or hydroxyeicosatrienoic acids (HETEs). The protein is Long-chain-fatty-acid--CoA ligase 1 of Mus musculus (Mouse).